The primary structure comprises 222 residues: Probable transaldolase (222 aa).

Lysine 91 acts as the Schiff-base intermediate with substrate in catalysis.

This sequence belongs to the transaldolase family. Type 3B subfamily.

It is found in the cytoplasm. The catalysed reaction is D-sedoheptulose 7-phosphate + D-glyceraldehyde 3-phosphate = D-erythrose 4-phosphate + beta-D-fructose 6-phosphate. Its pathway is carbohydrate degradation; pentose phosphate pathway; D-glyceraldehyde 3-phosphate and beta-D-fructose 6-phosphate from D-ribose 5-phosphate and D-xylulose 5-phosphate (non-oxidative stage): step 2/3. Functionally, transaldolase is important for the balance of metabolites in the pentose-phosphate pathway. This is Probable transaldolase from Pelodictyon phaeoclathratiforme (strain DSM 5477 / BU-1).